A 94-amino-acid chain; its full sequence is Surfactant-associated protein 3 (94 aa).

Found in lung alveolar cells type I and II, as well as alveolar macrophages (at protein level). Detected also in testis and kidney. Expressed by different tissues of the ocular system like cornea, conjuctiva, lacrimal gland, eyelid and efferent tear ducts (at protein level). From these tissues is secreted into the tear film (at protein level).

It localises to the cytoplasm. The protein localises to the secreted. Putative surfactant protein. May be involved in wound healing and in the reduction of the surface tension at the ocular surface. This is Surfactant-associated protein 3 (SFTA3) from Homo sapiens (Human).